We begin with the raw amino-acid sequence, 510 residues long: Glycogen synthase (510 aa).

Lysine 18 contacts ADP-alpha-D-glucose.

Belongs to the glycosyltransferase 1 family. Bacterial/plant glycogen synthase subfamily.

The catalysed reaction is [(1-&gt;4)-alpha-D-glucosyl](n) + ADP-alpha-D-glucose = [(1-&gt;4)-alpha-D-glucosyl](n+1) + ADP + H(+). Its pathway is glycan biosynthesis; glycogen biosynthesis. Its function is as follows. Synthesizes alpha-1,4-glucan chains using ADP-glucose. This Bordetella bronchiseptica (strain ATCC BAA-588 / NCTC 13252 / RB50) (Alcaligenes bronchisepticus) protein is Glycogen synthase.